The chain runs to 392 residues: 8-amino-7-oxononanoate synthase (392 aa).

Residue arginine 21 coordinates substrate. 108–109 lines the pyridoxal 5'-phosphate pocket; it reads GF. Histidine 133 is a binding site for substrate. Pyridoxal 5'-phosphate-binding positions include serine 181, 206 to 209, and 237 to 240; these read DDAH and TLSK. At lysine 240 the chain carries N6-(pyridoxal phosphate)lysine. Threonine 354 is a substrate binding site.

Belongs to the class-II pyridoxal-phosphate-dependent aminotransferase family. BioF subfamily. As to quaternary structure, homodimer. It depends on pyridoxal 5'-phosphate as a cofactor.

It catalyses the reaction 6-carboxyhexanoyl-[ACP] + L-alanine + H(+) = (8S)-8-amino-7-oxononanoate + holo-[ACP] + CO2. It functions in the pathway cofactor biosynthesis; biotin biosynthesis. In terms of biological role, catalyzes the decarboxylative condensation of pimeloyl-[acyl-carrier protein] and L-alanine to produce 8-amino-7-oxononanoate (AON), [acyl-carrier protein], and carbon dioxide. In Symbiobacterium thermophilum (strain DSM 24528 / JCM 14929 / IAM 14863 / T), this protein is 8-amino-7-oxononanoate synthase.